The chain runs to 190 residues: TATA box-binding protein-like 1 (190 aa).

The protein belongs to the TBP family. As to quaternary structure, binds TFIIA and TFIIB.

It is found in the cytoplasm. The protein localises to the nucleus. Functionally, part of a specialized transcription system that mediates the transcription of most ribosomal proteins through the 5'-TCT-3' motif which is a core promoter element at these genes. Seems to also mediate the transcription of NF1. Does not bind the TATA box. This Pongo abelii (Sumatran orangutan) protein is TATA box-binding protein-like 1 (TBPL1).